Here is a 190-residue protein sequence, read N- to C-terminus: GATA transcription factor 17 (190 aa).

Basic and acidic residues predominate over residues 1–14 (MSEGSEDTKTKLDS). Disordered stretches follow at residues 1–42 (MSEG…DTKR) and 77–101 (RQAA…NDLN). The segment at 38-92 (GDTKRTCVDCGTIRTPLWRGGPAGPKSLCNACGIKSRKKRQAALGMRSEEKKKNR) adopts a GATA-type zinc-finger fold.

Belongs to the type IV zinc-finger family. Class B subfamily.

The protein resides in the nucleus. Its function is as follows. Transcriptional regulator that specifically binds 5'-GATA-3' or 5'-GAT-3' motifs within gene promoters. The polypeptide is GATA transcription factor 17 (GATA17) (Arabidopsis thaliana (Mouse-ear cress)).